Reading from the N-terminus, the 63-residue chain is Large ribosomal subunit protein bL28 (63 aa).

The protein belongs to the bacterial ribosomal protein bL28 family.

The chain is Large ribosomal subunit protein bL28 from Sulfurihydrogenibium sp. (strain YO3AOP1).